The primary structure comprises 91 residues: Acylphosphatase (91 aa).

One can recognise an Acylphosphatase-like domain in the interval 3–90 (RVLIRVKGKV…EIYLDFSITQ (88 aa)). Residues arginine 18 and asparagine 36 contribute to the active site.

The protein belongs to the acylphosphatase family.

The catalysed reaction is an acyl phosphate + H2O = a carboxylate + phosphate + H(+). In Shewanella amazonensis (strain ATCC BAA-1098 / SB2B), this protein is Acylphosphatase (acyP).